The following is a 365-amino-acid chain: Chorismate synthase (365 aa).

A compositionally biased stretch (basic and acidic residues) spans 41–51 (IQKELDRRRPG). Residues 41–62 (IQKELDRRRPGQSEVSTPRSEA) form a disordered region. NADP(+) is bound at residue Arg-48. Residues 125 to 127 (RSS), Gly-285, 300 to 304 (KPTPS), and Arg-327 each bind FMN.

Belongs to the chorismate synthase family. The cofactor is FMNH2.

It carries out the reaction 5-O-(1-carboxyvinyl)-3-phosphoshikimate = chorismate + phosphate. It functions in the pathway metabolic intermediate biosynthesis; chorismate biosynthesis; chorismate from D-erythrose 4-phosphate and phosphoenolpyruvate: step 7/7. Catalyzes the anti-1,4-elimination of the C-3 phosphate and the C-6 proR hydrogen from 5-enolpyruvylshikimate-3-phosphate (EPSP) to yield chorismate, which is the branch point compound that serves as the starting substrate for the three terminal pathways of aromatic amino acid biosynthesis. This reaction introduces a second double bond into the aromatic ring system. The polypeptide is Chorismate synthase (Methanosarcina mazei (strain ATCC BAA-159 / DSM 3647 / Goe1 / Go1 / JCM 11833 / OCM 88) (Methanosarcina frisia)).